The following is a 79-amino-acid chain: Cytochrome b (79 aa).

3 helical membrane passes run 1 to 7 (TALFLAM), 31 to 52 (WLIRNMHANGASFLFICIYLHI), and 67 to 79 (WNIGVILLLLTMM). Heme b is bound by residues His-37 and His-51.

This sequence belongs to the cytochrome b family. As to quaternary structure, the cytochrome bc1 complex contains 3 respiratory subunits (MT-CYB, CYC1 and UQCRFS1), 2 core proteins (UQCRC1 and UQCRC2) and probably 6 low-molecular weight proteins. The cofactor is heme b.

The protein localises to the mitochondrion inner membrane. Its function is as follows. Component of the ubiquinol-cytochrome c reductase complex (complex III or cytochrome b-c1 complex) that is part of the mitochondrial respiratory chain. The b-c1 complex mediates electron transfer from ubiquinol to cytochrome c. Contributes to the generation of a proton gradient across the mitochondrial membrane that is then used for ATP synthesis. The polypeptide is Cytochrome b (mt-cyb) (Julidochromis regani (Convict julie)).